Consider the following 954-residue polypeptide: Glycine dehydrogenase (decarboxylating) (954 aa).

An N6-(pyridoxal phosphate)lysine modification is found at Lys-704.

Belongs to the GcvP family. In terms of assembly, the glycine cleavage system is composed of four proteins: P, T, L and H. Pyridoxal 5'-phosphate is required as a cofactor.

The enzyme catalyses N(6)-[(R)-lipoyl]-L-lysyl-[glycine-cleavage complex H protein] + glycine + H(+) = N(6)-[(R)-S(8)-aminomethyldihydrolipoyl]-L-lysyl-[glycine-cleavage complex H protein] + CO2. In terms of biological role, the glycine cleavage system catalyzes the degradation of glycine. The P protein binds the alpha-amino group of glycine through its pyridoxal phosphate cofactor; CO(2) is released and the remaining methylamine moiety is then transferred to the lipoamide cofactor of the H protein. The protein is Glycine dehydrogenase (decarboxylating) of Vibrio parahaemolyticus serotype O3:K6 (strain RIMD 2210633).